The following is a 181-amino-acid chain: Large ribosomal subunit protein uL5 (181 aa).

The protein belongs to the universal ribosomal protein uL5 family. In terms of assembly, part of the 50S ribosomal subunit; part of the 5S rRNA/L5/L18/L25 subcomplex. Contacts the 5S rRNA and the P site tRNA. Forms a bridge to the 30S subunit in the 70S ribosome.

In terms of biological role, this is one of the proteins that bind and probably mediate the attachment of the 5S RNA into the large ribosomal subunit, where it forms part of the central protuberance. In the 70S ribosome it contacts protein S13 of the 30S subunit (bridge B1b), connecting the 2 subunits; this bridge is implicated in subunit movement. Contacts the P site tRNA; the 5S rRNA and some of its associated proteins might help stabilize positioning of ribosome-bound tRNAs. The sequence is that of Large ribosomal subunit protein uL5 from Campylobacter jejuni subsp. doylei (strain ATCC BAA-1458 / RM4099 / 269.97).